A 418-amino-acid polypeptide reads, in one-letter code: Tyrosine--tRNA ligase 1 (418 aa).

Tyr34 contacts L-tyrosine. Positions 39 to 48 (PTADSLHIGH) match the 'HIGH' region motif. L-tyrosine contacts are provided by Tyr169 and Gln173. Positions 230 to 234 (KFGKT) match the 'KMSKS' region motif. Lys233 is a binding site for ATP. The S4 RNA-binding domain maps to 352–418 (TVLIDLLVES…GKKKYFLIRY (67 aa)).

It belongs to the class-I aminoacyl-tRNA synthetase family. TyrS type 1 subfamily. As to quaternary structure, homodimer.

It is found in the cytoplasm. The enzyme catalyses tRNA(Tyr) + L-tyrosine + ATP = L-tyrosyl-tRNA(Tyr) + AMP + diphosphate + H(+). Catalyzes the attachment of tyrosine to tRNA(Tyr) in a two-step reaction: tyrosine is first activated by ATP to form Tyr-AMP and then transferred to the acceptor end of tRNA(Tyr). The chain is Tyrosine--tRNA ligase 1 from Bacillus cereus (strain ATCC 10987 / NRS 248).